We begin with the raw amino-acid sequence, 442 residues long: UDP-N-acetylmuramate--L-alanine ligase (442 aa).

110-116 (GAHGKTS) provides a ligand contact to ATP.

Belongs to the MurCDEF family.

The protein localises to the cytoplasm. The enzyme catalyses UDP-N-acetyl-alpha-D-muramate + L-alanine + ATP = UDP-N-acetyl-alpha-D-muramoyl-L-alanine + ADP + phosphate + H(+). Its pathway is cell wall biogenesis; peptidoglycan biosynthesis. In terms of biological role, cell wall formation. The sequence is that of UDP-N-acetylmuramate--L-alanine ligase from Streptococcus thermophilus (strain ATCC BAA-491 / LMD-9).